We begin with the raw amino-acid sequence, 117 residues long: Regulator of ribonuclease activity B (117 aa).

Belongs to the RraB family. Interacts with the C-terminal region of Rne.

It localises to the cytoplasm. Globally modulates RNA abundance by binding to RNase E (Rne) and regulating its endonucleolytic activity. Can modulate Rne action in a substrate-dependent manner by altering the composition of the degradosome. This chain is Regulator of ribonuclease activity B, found in Pseudoalteromonas atlantica (strain T6c / ATCC BAA-1087).